Reading from the N-terminus, the 437-residue chain is Matrix remodeling-associated protein 8 (437 aa).

Positions 1–22 (MEQLAKLLLWQLLLQQSSVVYL) are cleaved as a signal peptide. The Extracellular segment spans residues 23–339 (YSVPADASNP…PESRIHFFQQ (317 aa)). Ig-like V-type domains follow at residues 32 to 159 (PDSV…LDIT) and 167 to 294 (EYWD…VFVT). N-linked (GlcNAc...) asparagine glycosylation is found at Asn-41, Asn-121, Asn-246, and Asn-304. 2 cysteine pairs are disulfide-bonded: Cys-54/Cys-139 and Cys-188/Cys-274. The chain crosses the membrane as a helical span at residues 340–360 (LGYVLATLLLFVVLLIIVVFI). The Cytoplasmic portion of the chain corresponds to 361 to 437 (TRKRRQRGYE…DKDFRKEYCK (77 aa)).

Homodimer in cis. Does not appear to form trans-homodimers.

Its subcellular location is the cell membrane. Its function is as follows. Transmembrane protein which can modulate activity of various signaling pathways, probably via binding to integrin ITGAV:ITGB3. Mediates heterophilic cell-cell interactions in vitro. The protein is Matrix remodeling-associated protein 8 (MXRA8) of Gallus gallus (Chicken).